Reading from the N-terminus, the 457-residue chain is UDP-N-acetylmuramate--L-alanine ligase (457 aa).

112–118 (GTHGKTT) contributes to the ATP binding site.

The protein belongs to the MurCDEF family.

The protein localises to the cytoplasm. It catalyses the reaction UDP-N-acetyl-alpha-D-muramate + L-alanine + ATP = UDP-N-acetyl-alpha-D-muramoyl-L-alanine + ADP + phosphate + H(+). It participates in cell wall biogenesis; peptidoglycan biosynthesis. Its function is as follows. Cell wall formation. The sequence is that of UDP-N-acetylmuramate--L-alanine ligase from Solidesulfovibrio magneticus (strain ATCC 700980 / DSM 13731 / RS-1) (Desulfovibrio magneticus).